We begin with the raw amino-acid sequence, 200 residues long: Somatotropin (200 aa).

The first 22 residues, 1-22, serve as a signal peptide directing secretion; that stretch reads MARVLVVLSVVVASLFFSQGAT. His-38 contributes to the Zn(2+) binding site. Cys-71 and Cys-173 are disulfide-bonded. Glu-182 contributes to the Zn(2+) binding site. Cysteines 190 and 198 form a disulfide.

Belongs to the somatotropin/prolactin family.

It is found in the secreted. Growth hormone plays an important role in growth control and is involved in the regulation of several anabolic processes. Implicated as an osmoregulatory substance important for seawater adaptation. The protein is Somatotropin (gh) of Pangasianodon gigas (Mekong giant catfish).